The primary structure comprises 499 residues: MSKLEALQVFLLEKLNEKNEIPNTSHLEFDGKKLGPQEAQSAILSLAAKNMIEFSRHEIEIYNLTAEGENICANGSHEAKVYNEICASMSGLNIGELKKKLGNSAGIGQGRAFKLGWIKKDGDKLVKNTDSITDETPKVLSEIKEHGTISDSKTLTDLKKRKLVERNKIMYFSLRKGPNFSLQIEKLNTDLTAEMITSRSWESAKFKSYNFAAEGIPPAGGCLHPLMKVREEFRKFFFELGFEEMPTNNFVESGFWNFDALFVPQQHSARDAQDTFFLKVPASTDKLPDPEYVARVKATHENGGETKGIGYRAPFSLEETRKLVLRTHTTAVSANMLYKLAQNGFHPAKYFSIDRVFRNETVDATHLAEFHQVEGVICDRNITLGDLIGFLEVFFGKMNVKNLRFKPAYNPYTEPSLEVFSYHEKLGKWVEVGNSGMFRPEMLEPMGLPKDVRCLGFGLSLERPTMIKYGVADIRQLIGPKVNLDLIEASPAVRLDKEE.

Residues threonine 330, 372–374 (QVE), and tyrosine 412 contribute to the L-phenylalanine site. Glutamate 414 is a Mg(2+) binding site. L-phenylalanine is bound at residue phenylalanine 438.

It belongs to the class-II aminoacyl-tRNA synthetase family. Phe-tRNA synthetase alpha subunit type 2 subfamily. Tetramer of two alpha and two beta subunits. Mg(2+) is required as a cofactor.

Its subcellular location is the cytoplasm. It catalyses the reaction tRNA(Phe) + L-phenylalanine + ATP = L-phenylalanyl-tRNA(Phe) + AMP + diphosphate + H(+). The sequence is that of Phenylalanine--tRNA ligase alpha subunit (frs2) from Schizosaccharomyces pombe (strain 972 / ATCC 24843) (Fission yeast).